The chain runs to 622 residues: uncharacterized protein (622 aa).

The signal sequence occupies residues 1–20 (MKIKAVAIFLSLLMIISLFS).

This is an uncharacterized protein from Methanocaldococcus jannaschii (strain ATCC 43067 / DSM 2661 / JAL-1 / JCM 10045 / NBRC 100440) (Methanococcus jannaschii).